The chain runs to 306 residues: Dermonecrotic toxin LarSicTox-alphaIB1ai (306 aa).

A signal peptide is located at residue Val-1. A propeptide spanning residues 2 to 27 (RATEKFASMYFFCHSPQSAETDVAER) is cleaved from the precursor. The active site involves His-38. Residues Glu-58 and Asp-60 each coordinate Mg(2+). The active-site Nucleophile is the His-74. Disulfide bonds link Cys-78/Cys-84 and Cys-80/Cys-223. Asp-118 provides a ligand contact to Mg(2+). N-linked (GlcNAc...) asparagine glycosylation is present at Asn-283.

Belongs to the arthropod phospholipase D family. Class II subfamily. Mg(2+) serves as cofactor. Expressed by the venom gland.

The protein localises to the secreted. The catalysed reaction is an N-(acyl)-sphingosylphosphocholine = an N-(acyl)-sphingosyl-1,3-cyclic phosphate + choline. It catalyses the reaction an N-(acyl)-sphingosylphosphoethanolamine = an N-(acyl)-sphingosyl-1,3-cyclic phosphate + ethanolamine. The enzyme catalyses a 1-acyl-sn-glycero-3-phosphocholine = a 1-acyl-sn-glycero-2,3-cyclic phosphate + choline. It carries out the reaction a 1-acyl-sn-glycero-3-phosphoethanolamine = a 1-acyl-sn-glycero-2,3-cyclic phosphate + ethanolamine. Functionally, dermonecrotic toxins cleave the phosphodiester linkage between the phosphate and headgroup of certain phospholipids (sphingolipid and lysolipid substrates), forming an alcohol (often choline) and a cyclic phosphate. This toxin acts on sphingomyelin (SM). It may also act on ceramide phosphoethanolamine (CPE), lysophosphatidylcholine (LPC) and lysophosphatidylethanolamine (LPE), but not on lysophosphatidylserine (LPS), and lysophosphatidylglycerol (LPG). It acts by transphosphatidylation, releasing exclusively cyclic phosphate products as second products. Induces dermonecrosis, hemolysis, increased vascular permeability, edema, inflammatory response, and platelet aggregation. In Loxosceles arizonica (Arizona brown spider), this protein is Dermonecrotic toxin LarSicTox-alphaIB1ai.